A 476-amino-acid chain; its full sequence is Aspartyl/glutamyl-tRNA(Asn/Gln) amidotransferase subunit B (476 aa).

This sequence belongs to the GatB/GatE family. GatB subfamily. As to quaternary structure, heterotrimer of A, B and C subunits.

It carries out the reaction L-glutamyl-tRNA(Gln) + L-glutamine + ATP + H2O = L-glutaminyl-tRNA(Gln) + L-glutamate + ADP + phosphate + H(+). The enzyme catalyses L-aspartyl-tRNA(Asn) + L-glutamine + ATP + H2O = L-asparaginyl-tRNA(Asn) + L-glutamate + ADP + phosphate + 2 H(+). Functionally, allows the formation of correctly charged Asn-tRNA(Asn) or Gln-tRNA(Gln) through the transamidation of misacylated Asp-tRNA(Asn) or Glu-tRNA(Gln) in organisms which lack either or both of asparaginyl-tRNA or glutaminyl-tRNA synthetases. The reaction takes place in the presence of glutamine and ATP through an activated phospho-Asp-tRNA(Asn) or phospho-Glu-tRNA(Gln). The chain is Aspartyl/glutamyl-tRNA(Asn/Gln) amidotransferase subunit B from Clostridium kluyveri (strain ATCC 8527 / DSM 555 / NBRC 12016 / NCIMB 10680 / K1).